The primary structure comprises 128 residues: Natriuretic peptides A (128 aa).

Residues 36 to 84 (QVASEQNEEAGAVLSALPEVPSWPGEAGPAQREGGALGRGPWDSSDRSA) form a disordered region. A propeptide spanning residues 68-78 (EGGALGRGPWD) is cleaved from the precursor. S104 carries the post-translational modification Phosphoserine. Cysteines 105 and 121 form a disulfide. An important for degradation of atrial natriuretic peptide by IDE region spans residues 122–126 (NSFRY).

This sequence belongs to the natriuretic peptide family. As to quaternary structure, homodimer; disulfide-linked antiparallel dimer. In terms of processing, the precursor molecule is proteolytically cleaved by CORIN at Arg-98 to produce atrial natriuretic peptide. Undergoes further proteolytic cleavage by unknown proteases to give rise to long-acting natriuretic peptide, vessel dilator and kaliuretic peptide. Additional processing gives rise to the auriculin and atriopeptin peptides. In the kidneys, alternative processing by an unknown protease results in the peptide urodilatin. Post-translationally, cleavage by MME initiates degradation of the factor and thereby regulates its activity. Degraded by IDE (in vitro). During IDE degradation, the resulting products can temporarily stimulate NPR2 to produce cGMP, before the fragments are completely degraded and inactivated by IDE (in vitro). Degraded by IDE. In terms of processing, phosphorylation on Ser-104 decreases vasorelaxant activity.

The protein localises to the secreted. It localises to the perikaryon. It is found in the cell projection. Functionally, hormone that plays a key role in mediating cardio-renal homeostasis, and is involved in vascular remodeling and regulating energy metabolism. Acts by specifically binding and stimulating NPR1 to produce cGMP, which in turn activates effector proteins, such as PRKG1, that drive various biological responses. Regulates vasodilation, natriuresis, diuresis and aldosterone synthesis and is therefore essential for regulating blood pressure, controlling the extracellular fluid volume and maintaining the fluid-electrolyte balance. Also involved in inhibiting cardiac remodeling and cardiac hypertrophy by inducing cardiomyocyte apoptosis and attenuating the growth of cardiomyocytes and fibroblasts. Plays a role in female pregnancy by promoting trophoblast invasion and spiral artery remodeling in uterus, and thus prevents pregnancy-induced hypertension. In adipose tissue, acts in various cGMP- and PKG-dependent pathways to regulate lipid metabolism and energy homeostasis. This includes up-regulating lipid metabolism and mitochondrial oxygen utilization by activating the AMP-activated protein kinase (AMPK), and increasing energy expenditure by acting via MAPK11 to promote the UCP1-dependent thermogenesis of brown adipose tissue. Binds the clearance receptor NPR3 which removes the hormone from circulation. Its function is as follows. May have a role in cardio-renal homeostasis through regulation of natriuresis, diuresis, vasodilation, and inhibiting aldosterone synthesis. In vitro, promotes the production of cGMP and induces vasodilation. May promote natriuresis, at least in part, by enhancing prostaglandin E2 synthesis resulting in the inhibition of renal Na+-K+-ATPase. However reports on the involvement of this peptide in mammal blood volume and blood pressure homeostasis are conflicting; according to a report, in vivo it is not sufficient to activate cGMP and does not inhibit collecting duct transport nor effect diuresis and natriuresis. Appears to bind to specific receptors that are distinct from the receptors bound by atrial natriuretic peptide and vessel dilator. Possibly enhances protein excretion in urine by decreasing proximal tubular protein reabsorption. May have a role in cardio-renal homeostasis through regulation of natriuresis, diuresis, and vasodilation. In vitro, promotes the production of cGMP and induces vasodilation. May promote natriuresis, at least in part, by enhancing prostaglandin E2 synthesis resulting in the inhibition of renal Na+-K+-ATPase. However reports on the involvement of this peptide in mammal blood volume and blood pressure homeostasis are conflicting; according to a report it is not sufficient to activate cGMP and does not inhibit collecting duct transport nor effect diuresis and natriuresis. Appears to bind to specific receptors that are distinct from the receptors bound by the atrial natriuretic and long-acting natriuretic peptides. Possibly functions in protein excretion in urine by maintaining the integrity of the proximal tubules and enhancing protein excretion by decreasing proximal tubular protein reabsorption. In terms of biological role, may have a role in cardio-renal homeostasis through regulation of diuresis and inhibiting aldosterone synthesis. In vitro, promotes the production of cGMP and induces vasodilation. May promote natriuresis, at least in part, by enhancing prostaglandin E2 synthesis resulting in the inhibition of renal Na+-K+-ATPase. May have a role in potassium excretion but not sodium excretion (natriuresis). Possibly enhances protein excretion in urine by decreasing proximal tubular protein reabsorption. Functionally, hormone produced in the kidneys that appears to be important for maintaining cardio-renal homeostasis. Mediates vasodilation, natriuresis and diuresis primarily in the renal system, in order to maintain the extracellular fluid volume and control the fluid-electrolyte balance. Specifically binds and stimulates cGMP production by renal transmembrane receptors, likely NPR1. Urodilatin not ANP, may be the natriuretic peptide responsible for the regulation of sodium and water homeostasis in the kidney. Its function is as follows. May have a role in cardio-renal homeostasis through regulation of natriuresis and vasodilation. In vivo promotes natriuresis and in vitro, vasodilates renal artery strips. May have a role in cardio-renal homeostasis through regulation of regulation of natriuresis and vasodilation. In vivo promotes natriuresis. In vitro, vasodilates intestinal smooth muscle but not smooth muscle strips. In terms of biological role, may have a role in cardio-renal homeostasis through regulation of natriuresis and vasodilation. In vivo promotes natriuresis. In vitro, selectively vasodilates intestinal and vascular smooth muscle strips. Functionally, may have a role in cardio-renal homeostasis through regulation of natriuresis and vasodilation. In vivo promotes natriuresis. In vitro, selectively vasodilates intestinal smooth muscle but not vascular smooth muscle strips. In Cavia porcellus (Guinea pig), this protein is Natriuretic peptides A (NPPA).